Consider the following 112-residue polypeptide: UPF0342 protein SPT_0901 (112 aa).

Belongs to the UPF0342 family.

This Streptococcus pneumoniae (strain Taiwan19F-14) protein is UPF0342 protein SPT_0901.